A 152-amino-acid polypeptide reads, in one-letter code: Nucleoside diphosphate kinase A (152 aa).

Positions 12, 60, 88, and 94 each coordinate ATP. K100 is covalently cross-linked (Glycyl lysine isopeptide (Lys-Gly) (interchain with G-Cter in ubiquitin)). Residues R105 and N115 each contribute to the ATP site. H118 (pros-phosphohistidine intermediate) is an active-site residue. Residues S120, S122, and S125 each carry the phosphoserine modification.

It belongs to the NDK family. As to quaternary structure, hexamer of two different chains: An and B (A6, A5B, A4B2, A3B3, A2B4, AB5, B6). Interacts with PRUNE1. Component of the SET complex, composed of at least ANP32A, APEX1, HMGB2, NME1, SET and TREX1. Within this complex, interacts directly with SET. Also interacts with TREX1, but only following translocation to the nucleus. It depends on Mg(2+) as a cofactor.

The protein resides in the cytoplasm. The protein localises to the nucleus. It carries out the reaction a 2'-deoxyribonucleoside 5'-diphosphate + ATP = a 2'-deoxyribonucleoside 5'-triphosphate + ADP. The catalysed reaction is a ribonucleoside 5'-diphosphate + ATP = a ribonucleoside 5'-triphosphate + ADP. Its activity is regulated as follows. Autophosphorylation at His-118 increases serine/threonine protein kinase activity of the enzyme. Interaction with the SET complex inhibits exonuclease activity. In terms of biological role, major role in the synthesis of nucleoside triphosphates other than ATP. The ATP gamma phosphate is transferred to the NDP beta phosphate via a ping-pong mechanism, using a phosphorylated active-site intermediate. Possesses nucleoside-diphosphate kinase, serine/threonine-specific protein kinase, geranyl and farnesyl pyrophosphate kinase, histidine protein kinase and 3'-5' exonuclease activities. Involved in cell proliferation, differentiation and development, signal transduction, G protein-coupled receptor endocytosis, and gene expression. Required for neural development including neural patterning and cell fate determination. During GZMA-mediated cell death, works in concert with TREX1. NME1 nicks one strand of DNA and TREX1 removes bases from the free 3' end to enhance DNA damage and prevent DNA end reannealing and rapid repair. This is Nucleoside diphosphate kinase A (Nme1) from Rattus norvegicus (Rat).